Consider the following 150-residue polypeptide: Ribonuclease H (150 aa).

An RNase H type-1 domain is found at 1–146 (MPELFAYTDG…ADELARAGMA (146 aa)). Mg(2+) contacts are provided by Asp9, Glu52, Asp74, and Asp138.

This sequence belongs to the RNase H family. As to quaternary structure, monomer. The cofactor is Mg(2+).

It is found in the cytoplasm. The catalysed reaction is Endonucleolytic cleavage to 5'-phosphomonoester.. In terms of biological role, endonuclease that specifically degrades the RNA of RNA-DNA hybrids. The sequence is that of Ribonuclease H from Roseobacter denitrificans (strain ATCC 33942 / OCh 114) (Erythrobacter sp. (strain OCh 114)).